Consider the following 264-residue polypeptide: Thymidylate synthase (264 aa).

A dUMP-binding site is contributed by arginine 21. Histidine 51 is a (6R)-5,10-methylene-5,6,7,8-tetrahydrofolate binding site. 126–127 provides a ligand contact to dUMP; the sequence is RR. Residue cysteine 146 is the Nucleophile of the active site. DUMP is bound by residues 166–169, asparagine 177, and 207–209; these read RSGD and HLY. Position 169 (aspartate 169) interacts with (6R)-5,10-methylene-5,6,7,8-tetrahydrofolate. Alanine 263 contacts (6R)-5,10-methylene-5,6,7,8-tetrahydrofolate.

Belongs to the thymidylate synthase family. Bacterial-type ThyA subfamily. In terms of assembly, homodimer.

It localises to the cytoplasm. It carries out the reaction dUMP + (6R)-5,10-methylene-5,6,7,8-tetrahydrofolate = 7,8-dihydrofolate + dTMP. Its pathway is pyrimidine metabolism; dTTP biosynthesis. In terms of biological role, catalyzes the reductive methylation of 2'-deoxyuridine-5'-monophosphate (dUMP) to 2'-deoxythymidine-5'-monophosphate (dTMP) while utilizing 5,10-methylenetetrahydrofolate (mTHF) as the methyl donor and reductant in the reaction, yielding dihydrofolate (DHF) as a by-product. This enzymatic reaction provides an intracellular de novo source of dTMP, an essential precursor for DNA biosynthesis. This chain is Thymidylate synthase, found in Xanthomonas oryzae pv. oryzae (strain MAFF 311018).